Here is a 160-residue protein sequence, read N- to C-terminus: Cyclic pyranopterin monophosphate synthase (160 aa).

Substrate-binding positions include methionine 75–histidine 77 and methionine 116–glutamate 117. The active site involves aspartate 131.

This sequence belongs to the MoaC family. Homohexamer; trimer of dimers.

The catalysed reaction is (8S)-3',8-cyclo-7,8-dihydroguanosine 5'-triphosphate = cyclic pyranopterin phosphate + diphosphate. Its pathway is cofactor biosynthesis; molybdopterin biosynthesis. Functionally, catalyzes the conversion of (8S)-3',8-cyclo-7,8-dihydroguanosine 5'-triphosphate to cyclic pyranopterin monophosphate (cPMP). The polypeptide is Cyclic pyranopterin monophosphate synthase (Staphylococcus haemolyticus (strain JCSC1435)).